A 289-amino-acid polypeptide reads, in one-letter code: SAGA-associated factor 29kDa (289 aa).

Residues 9–36 (AQQIQDRLKDIQQNIHNVDEERRRAENS) are a coiled coil. An SGF29 C-terminal domain is found at 137–278 (GNYVAKVGDN…VIAYRPTKKG (142 aa)). 2 histone H3K4me3 N-terminus binding regions span residues 179-181 (DID) and 225-228 (QTTC). Positions 249–251 (FED) are histone H3K4me3 binding.

The protein belongs to the SGF29 family. As to quaternary structure, component of the Spt-Ada-Gcn5 acetyltransferase (SAGA) complex consisting of wda/Taf5L, Saf6, Taf9, Taf10b, Taf12, Ada1, Spt3, Spt7, Spt20, Sf3b3, Sf3b5, Nipped-A/Tra1, a histone acetyltransferase (HAT) module made up of Gcn5, Ada2b (Isoform B), Ada3 and Sgf29, and a deubiquitinase (DUB) module made up of not/nonstop, Sgf11, Atxn7 and e(y)2. Component of the Chiffon histone acetyltransferase (CHAT) complex consisting of Ada3, Sgf29, Gcn5, chif/chiffon and Ada2b (Isoform A).

It localises to the nucleus. Component of both the SAGA and CHAT histone acetyltransferase complexes, which both predominantly acetylate histone H3. This Drosophila melanogaster (Fruit fly) protein is SAGA-associated factor 29kDa.